A 110-amino-acid polypeptide reads, in one-letter code: Large ribosomal subunit protein eL30 (110 aa).

Belongs to the eukaryotic ribosomal protein eL30 family.

This chain is Large ribosomal subunit protein eL30 (rpl30e), found in Methanocaldococcus jannaschii (strain ATCC 43067 / DSM 2661 / JAL-1 / JCM 10045 / NBRC 100440) (Methanococcus jannaschii).